A 328-amino-acid chain; its full sequence is tRNA dimethylallyltransferase (328 aa).

Position 19 to 26 (19 to 26 (GPTASGKT)) interacts with ATP. Residue 21–26 (TASGKT) coordinates substrate. Interaction with substrate tRNA regions lie at residues 50–53 (DSAL), 174–178 (QRIQR), and 257–262 (RCVGYR).

It belongs to the IPP transferase family. Monomer. Mg(2+) is required as a cofactor.

The catalysed reaction is adenosine(37) in tRNA + dimethylallyl diphosphate = N(6)-dimethylallyladenosine(37) in tRNA + diphosphate. In terms of biological role, catalyzes the transfer of a dimethylallyl group onto the adenine at position 37 in tRNAs that read codons beginning with uridine, leading to the formation of N6-(dimethylallyl)adenosine (i(6)A). The sequence is that of tRNA dimethylallyltransferase from Leptothrix cholodnii (strain ATCC 51168 / LMG 8142 / SP-6) (Leptothrix discophora (strain SP-6)).